The primary structure comprises 536 residues: Atrial natriuretic peptide receptor 3 (536 aa).

The N-terminal stretch at 1 to 26 is a signal peptide; that stretch reads MRSLLLFTFSACVLLARVLLAGGASS. The propeptide occupies 27 to 40; that stretch reads GAGDTRPGSRRRAR. Over 41–478 the chain is Extracellular; it reads EALAAQKIEV…KSSGGLEESA (438 aa). Asn-81 carries N-linked (GlcNAc...) asparagine glycosylation. Residues Ser-101, Val-130, and Cys-131 each contribute to the chloride site. 2 disulfides stabilise this stretch: Cys-103–Cys-131 and Cys-208–Cys-256. Residues Asn-288 and Asn-389 are each glycosylated (N-linked (GlcNAc...) asparagine). The helical transmembrane segment at 479–499 threads the bilayer; that stretch reads VTGIVVGALLGAGLLMAFYFF. The Cytoplasmic portion of the chain corresponds to 500–536; it reads RKKYRITIERRNQQEESNIGKHRELREDSIRSHFSVA.

Belongs to the ANF receptor family. Homodimer; disulfide-linked. Interacts with OSTN.

The protein resides in the cell membrane. Receptor for the natriuretic peptide hormones, binding with similar affinities atrial natriuretic peptide NPPA/ANP, brain natriuretic peptide NPPB/BNP, and C-type natriuretic peptide NPPC/CNP. May function as a clearance receptor for NPPA, NPPB and NPPC, regulating their local concentrations and effects. Acts as a regulator of osteoblast differentiation and bone growth by binding to its ligand osteocrin, thereby preventing binding between NPR3/NPR-C and natriuretic peptides, leading to increase cGMP production. The chain is Atrial natriuretic peptide receptor 3 (Npr3) from Mus musculus (Mouse).